The sequence spans 454 residues: Bifunctional protein GlmU (454 aa).

The interval Met-1–Arg-228 is pyrophosphorylase. UDP-N-acetyl-alpha-D-glucosamine contacts are provided by residues Leu-8–Gly-11, Lys-22, Gln-73, and Gly-78–Thr-79. Asp-103 lines the Mg(2+) pocket. Residues Gly-140, Glu-154, Asn-169, and Asn-226 each contribute to the UDP-N-acetyl-alpha-D-glucosamine site. Asn-226 contacts Mg(2+). The interval Ala-229–Asn-249 is linker. The N-acetyltransferase stretch occupies residues Gly-250–Lys-454. Residues Arg-331 and Lys-349 each coordinate UDP-N-acetyl-alpha-D-glucosamine. The Proton acceptor role is filled by His-361. 2 residues coordinate UDP-N-acetyl-alpha-D-glucosamine: Tyr-364 and Asn-375. Residues Asn-384–Tyr-385, Ala-421, and Arg-438 contribute to the acetyl-CoA site.

It in the N-terminal section; belongs to the N-acetylglucosamine-1-phosphate uridyltransferase family. In the C-terminal section; belongs to the transferase hexapeptide repeat family. As to quaternary structure, homotrimer. Requires Mg(2+) as cofactor.

It is found in the cytoplasm. The catalysed reaction is alpha-D-glucosamine 1-phosphate + acetyl-CoA = N-acetyl-alpha-D-glucosamine 1-phosphate + CoA + H(+). It catalyses the reaction N-acetyl-alpha-D-glucosamine 1-phosphate + UTP + H(+) = UDP-N-acetyl-alpha-D-glucosamine + diphosphate. The protein operates within nucleotide-sugar biosynthesis; UDP-N-acetyl-alpha-D-glucosamine biosynthesis; N-acetyl-alpha-D-glucosamine 1-phosphate from alpha-D-glucosamine 6-phosphate (route II): step 2/2. It participates in nucleotide-sugar biosynthesis; UDP-N-acetyl-alpha-D-glucosamine biosynthesis; UDP-N-acetyl-alpha-D-glucosamine from N-acetyl-alpha-D-glucosamine 1-phosphate: step 1/1. It functions in the pathway bacterial outer membrane biogenesis; LPS lipid A biosynthesis. Catalyzes the last two sequential reactions in the de novo biosynthetic pathway for UDP-N-acetylglucosamine (UDP-GlcNAc). The C-terminal domain catalyzes the transfer of acetyl group from acetyl coenzyme A to glucosamine-1-phosphate (GlcN-1-P) to produce N-acetylglucosamine-1-phosphate (GlcNAc-1-P), which is converted into UDP-GlcNAc by the transfer of uridine 5-monophosphate (from uridine 5-triphosphate), a reaction catalyzed by the N-terminal domain. The sequence is that of Bifunctional protein GlmU from Clostridium perfringens (strain ATCC 13124 / DSM 756 / JCM 1290 / NCIMB 6125 / NCTC 8237 / Type A).